A 696-amino-acid polypeptide reads, in one-letter code: Spindle assembly checkpoint component MAD1 (696 aa).

Disordered stretches follow at residues methionine 1–asparagine 22 and glutamine 394–lysine 415. The span at lysine 402–glutamate 413 shows a compositional bias: basic and acidic residues.

The protein belongs to the MAD1 family. Component of the mitotic checkpoint complex (MCC).

It localises to the nucleus. Functionally, central component of the spindle assembly checkpoint which is a feedback control that prevents cells with incompletely assembled spindles from leaving mitosis. In Candida albicans (strain SC5314 / ATCC MYA-2876) (Yeast), this protein is Spindle assembly checkpoint component MAD1.